A 118-amino-acid polypeptide reads, in one-letter code: Large ribosomal subunit protein uL24 (118 aa).

This sequence belongs to the universal ribosomal protein uL24 family. In terms of assembly, part of the 50S ribosomal subunit.

Its function is as follows. One of two assembly initiator proteins, it binds directly to the 5'-end of the 23S rRNA, where it nucleates assembly of the 50S subunit. In terms of biological role, one of the proteins that surrounds the polypeptide exit tunnel on the outside of the subunit. This chain is Large ribosomal subunit protein uL24, found in Prochlorococcus marinus (strain NATL2A).